The sequence spans 511 residues: Histidine ammonia-lyase (511 aa).

Positions 142–144 (ASG) form a cross-link, 5-imidazolinone (Ala-Gly). Serine 143 carries the post-translational modification 2,3-didehydroalanine (Ser).

The protein belongs to the PAL/histidase family. Post-translationally, contains an active site 4-methylidene-imidazol-5-one (MIO), which is formed autocatalytically by cyclization and dehydration of residues Ala-Ser-Gly.

The protein resides in the cytoplasm. It carries out the reaction L-histidine = trans-urocanate + NH4(+). Its pathway is amino-acid degradation; L-histidine degradation into L-glutamate; N-formimidoyl-L-glutamate from L-histidine: step 1/3. The protein is Histidine ammonia-lyase of Brucella ovis (strain ATCC 25840 / 63/290 / NCTC 10512).